A 911-amino-acid polypeptide reads, in one-letter code: Alpha-actinin-4 (911 aa).

The tract at residues Met-1 to Asp-30 is disordered. The segment at Met-1–Ser-269 is actin-binding. An interaction with VCL region spans residues Gln-12–Gly-26. At Tyr-31 the chain carries Phosphotyrosine. Residues Arg-40 to Asn-61 form an interaction with VCL region. Calponin-homology (CH) domains follow at residues Lys-50–Ala-154 and Thr-163–Ser-269. The LXXLL motif signature appears at Leu-84–Leu-88. The tract at residues Lys-108–Leu-126 is interaction with VCL. An N6-acetyllysine modification is found at Lys-114. The segment at Thr-177–Trp-192 is polyphosphoinositide (PIP2)-binding. The residue at position 214 (Lys-214) is an N6-acetyllysine. Thr-249 bears the Phosphothreonine mark. Spectrin repeat units lie at residues His-293–Asn-403, His-413–Lys-518, Gln-528–Glu-639, and His-649–Asn-752. Lys-592 and Lys-625 each carry N6-acetyllysine. Ser-696 carries the phosphoserine modification. A mediates interaction with MICALL2 region spans residues Trp-736–Leu-911. EF-hand domains are found at residues Glu-765–Asp-800 and Gln-806–Asp-841. Position 778 (Asp-778) interacts with Ca(2+). Lys-779 is modified (N6-acetyllysine). The Ca(2+) site is built by Asp-780 and Glu-789. Lys-859 carries the N6-acetyllysine modification. Ser-909 is subject to Phosphoserine.

Belongs to the alpha-actinin family. As to quaternary structure, homodimer; antiparallel. Identified in a IGF2BP1-dependent mRNP granule complex containing untranslated mRNAs. Component of the CART complex, at least composed of ACTN4, HGS/HRS, MYO5B and TRIM3. Binds TRIM3 at the N-terminus. Interacts with MAGI1. Interacts with PDLIM2. Identified in a complex with CASK, IQGAP1, MAGI2, NPHS1, SPTAN1 and SPTBN1. Interacts with MICALL2 (preferentially in opened conformation); stimulated by RAB13 activation. Interacts with PPARG and RARA. Binds to VCL; this interaction triggers VCL conformational changes. Interacts with SEPTIN14. Interacts with IGSF8.

The protein resides in the nucleus. Its subcellular location is the cytoplasm. It localises to the cell junction. The protein localises to the cytoskeleton. It is found in the stress fiber. The protein resides in the perinuclear region. Its function is as follows. F-actin cross-linking protein which is thought to anchor actin to a variety of intracellular structures. This is a bundling protein. Probably involved in vesicular trafficking via its association with the CART complex. The CART complex is necessary for efficient transferrin receptor recycling but not for EGFR degradation. Involved in tight junction assembly in epithelial cells probably through interaction with MICALL2. Links MICALL2 to the actin cytoskeleton and recruits it to the tight junctions. May also function as a transcriptional coactivator, stimulating transcription mediated by the nuclear hormone receptors PPARG and RARA. Association with IGSF8 regulates the immune synapse formation and is required for efficient T-cell activation. This chain is Alpha-actinin-4, found in Pongo abelii (Sumatran orangutan).